A 198-amino-acid chain; its full sequence is GTP-binding protein Di-Ras1 (198 aa).

GTP-binding positions include 17-22, 33-39, 61-65, 121-125, Ala151, and 151-152; these read GVGKSS, RDTYIPT, DTTGS, NKCDE, and AK. The Effector region motif lies at 36 to 44; the sequence is YIPTIEDTY. Cys195 carries the cysteine methyl ester modification. Cys195 carries S-geranylgeranyl cysteine lipidation. A propeptide spans 196-198 (removed in mature form); it reads ALM.

It belongs to the small GTPase superfamily. Di-Ras family.

Its subcellular location is the cell membrane. Its function is as follows. Displays low GTPase activity and exists predominantly in the GTP-bound form. The protein is GTP-binding protein Di-Ras1 (Diras1) of Mus musculus (Mouse).